Consider the following 259-residue polypeptide: Thiazole synthase (259 aa).

The Schiff-base intermediate with DXP role is filled by K95. 1-deoxy-D-xylulose 5-phosphate contacts are provided by residues G156, 182 to 183 (AG), and 204 to 205 (NT).

It belongs to the ThiG family. In terms of assembly, homotetramer. Forms heterodimers with either ThiH or ThiS.

The protein resides in the cytoplasm. The catalysed reaction is [ThiS sulfur-carrier protein]-C-terminal-Gly-aminoethanethioate + 2-iminoacetate + 1-deoxy-D-xylulose 5-phosphate = [ThiS sulfur-carrier protein]-C-terminal Gly-Gly + 2-[(2R,5Z)-2-carboxy-4-methylthiazol-5(2H)-ylidene]ethyl phosphate + 2 H2O + H(+). It functions in the pathway cofactor biosynthesis; thiamine diphosphate biosynthesis. Its function is as follows. Catalyzes the rearrangement of 1-deoxy-D-xylulose 5-phosphate (DXP) to produce the thiazole phosphate moiety of thiamine. Sulfur is provided by the thiocarboxylate moiety of the carrier protein ThiS. In vitro, sulfur can be provided by H(2)S. This Baumannia cicadellinicola subsp. Homalodisca coagulata protein is Thiazole synthase.